The following is a 390-amino-acid chain: Delta-aminolevulinic acid dehydratase, chloroplastic (390 aa).

The transit peptide at 1–24 (MQMMQRNVVGQRPVAGSRRSLVVA) directs the protein to the chloroplast. The disordered stretch occupies residues 34-69 (VSTNGKHRTGVPEGTPIVTPQDLPSRPRRNRRSESF). Residue lysine 251 is the Schiff-base intermediate with substrate of the active site. 5-aminolevulinate contacts are provided by arginine 261 and lysine 281. Glutamate 297 contacts Mg(2+). The active-site Schiff-base intermediate with substrate is the lysine 312. The 5-aminolevulinate site is built by serine 338 and tyrosine 377.

It belongs to the ALAD family. As to quaternary structure, homooctamer. The cofactor is Mg(2+).

It localises to the plastid. It is found in the chloroplast. The catalysed reaction is 2 5-aminolevulinate = porphobilinogen + 2 H2O + H(+). It functions in the pathway porphyrin-containing compound metabolism; protoporphyrin-IX biosynthesis; coproporphyrinogen-III from 5-aminolevulinate: step 1/4. Functionally, catalyzes an early step in the biosynthesis of tetrapyrroles. Binds two molecules of 5-aminolevulinate per subunit, each at a distinct site, and catalyzes their condensation to form porphobilinogen. This chain is Delta-aminolevulinic acid dehydratase, chloroplastic (HEMB), found in Chlamydomonas reinhardtii (Chlamydomonas smithii).